Consider the following 58-residue polypeptide: Small ribosomal subunit protein bS21 (58 aa).

A disordered region spans residues 34–58 (KREHYEKPSVKRKKKSEAARKRKFK). A compositionally biased stretch (basic residues) spans 43 to 58 (VKRKKKSEAARKRKFK).

The protein belongs to the bacterial ribosomal protein bS21 family.

This is Small ribosomal subunit protein bS21 from Clostridium acetobutylicum (strain ATCC 824 / DSM 792 / JCM 1419 / IAM 19013 / LMG 5710 / NBRC 13948 / NRRL B-527 / VKM B-1787 / 2291 / W).